The chain runs to 375 residues: Trans-enoyl reductase cghC (375 aa).

48-51 (VDTK) serves as a coordination point for NADP(+). 135–142 (NAWYTSGW) contacts substrate. Residues 188-191 (SSST), 211-214 (SARN), and 276-277 (LD) contribute to the NADP(+) site. Substrate is bound at residue 297–301 (GPELV). 366 to 367 (VS) contacts NADP(+).

This sequence belongs to the zinc-containing alcohol dehydrogenase family. As to quaternary structure, monomer.

The catalysed reaction is (2S,4S)-4-hydroxy-4-methylglutamate + 8 malonyl-CoA + 3 S-adenosyl-L-methionine + ATP + 8 NADPH + 11 H(+) = (2S)-3-[(2S)-3,5-dioxo-4-[(2E,4R,6R,8E,10E,12E)-4,6,12-trimethyltetradeca-2,8,10,12-tetraenoyl]pyrrolidin-2-yl]-2-hydroxy-2-methylpropanoate + AMP + 3 S-adenosyl-L-homocysteine + 8 CO2 + diphosphate + 8 NADP(+) + 8 CoA + 6 H2O. It functions in the pathway secondary metabolite biosynthesis. In terms of biological role, trans-enoyl reductase; part of the gene cluster that mediates the biosynthesis of the tetramic acid Sch210972, a potential anti-HIV fungal natural product that contains a decalin core. The PKS module of cghG together with the enoylreductase cghC catalyze the formation of the polyketide unit which is then conjugated to 4-hydroxyl-4-methyl glutamate (HMG) by the condensation domain of the cghG NRPS module. One unique structural feature of Sch210972 is the tetramic acid motif proposed to be derived from the non-proteinogenic amino acid HMG, by a Dieckmann-type condensation catalyzed by the reductase domain of cghG. The aldolase cghB catalyzes the aldol condensation of 2 molecules of pyruvic acid to yield the intermediate 4-hydroxyl-4-methyl-2-oxoglutarate (HMOG), which can then be stereoselectively transaminated by an unidentified enzyme to form HMG. The Diels-Alderase cghA then uses the Dieckmann product released by cghG as substrate and catalyzes the Diels-Alder cycloaddition to form the decalin ring of Sch210972. CghA also suppresses the nonenzymatic formation of the alternative stereoisomer. The chain is Trans-enoyl reductase cghC from Chaetomium globosum (strain ATCC 6205 / CBS 148.51 / DSM 1962 / NBRC 6347 / NRRL 1970) (Soil fungus).